Reading from the N-terminus, the 198-residue chain is Recombination protein RecR (198 aa).

The C4-type zinc-finger motif lies at 57-72 (CRQCRTLSEEELCPQC). The Toprim domain occupies 80 to 174 (SLLCVVEGPL…TLSRIAHGVP (95 aa)).

The protein belongs to the RecR family.

Functionally, may play a role in DNA repair. It seems to be involved in an RecBC-independent recombinational process of DNA repair. It may act with RecF and RecO. In Pseudomonas aeruginosa (strain LESB58), this protein is Recombination protein RecR.